A 935-amino-acid polypeptide reads, in one-letter code: C-1-tetrahydrofolate synthase, cytoplasmic (935 aa).

The residue at position 1 (methionine 1) is an N-acetylmethionine. The methylenetetrahydrofolate dehydrogenase and methenyltetrahydrofolate cyclohydrolase (D/C) domain stretch occupies residues 2–291 (APAEILNGRE…MLMQSTVESA (290 aa)). Substrate is bound by residues 52–56 (YINVK) and 99–101 (VQL). Lysine 56 is an active-site residue. NADP(+) contacts are provided by residues 172 to 174 (GRS) and serine 197. Residue 272 to 276 (PGGVG) coordinates substrate. The formyltetrahydrofolate synthetase domain stretch occupies residues 310–935 (LNLKTPDPSD…PETQQVNGLF (626 aa)). Serine 318 bears the Phosphoserine mark. Residue 380–387 (TPLGEGKS) participates in ATP binding. 2 positions are modified to phosphoserine: serine 413 and serine 490.

This sequence in the N-terminal section; belongs to the tetrahydrofolate dehydrogenase/cyclohydrolase family. In the C-terminal section; belongs to the formate--tetrahydrofolate ligase family. As to quaternary structure, homodimer.

It is found in the cytoplasm. It carries out the reaction (6R)-5,10-methylene-5,6,7,8-tetrahydrofolate + NADP(+) = (6R)-5,10-methenyltetrahydrofolate + NADPH. The enzyme catalyses (6R)-5,10-methenyltetrahydrofolate + H2O = (6R)-10-formyltetrahydrofolate + H(+). The catalysed reaction is (6S)-5,6,7,8-tetrahydrofolate + formate + ATP = (6R)-10-formyltetrahydrofolate + ADP + phosphate. Its pathway is one-carbon metabolism; tetrahydrofolate interconversion. Trifunctional enzyme that catalyzes the interconversion of three forms of one-carbon-substituted tetrahydrofolate: (6R)-5,10-methylene-5,6,7,8-tetrahydrofolate, 5,10-methenyltetrahydrofolate and (6S)-10-formyltetrahydrofolate. These derivatives of tetrahydrofolate are differentially required in nucleotide and amino acid biosynthesis, (6S)-10-formyltetrahydrofolate being required for purine biosynthesis while (6R)-5,10-methylene-5,6,7,8-tetrahydrofolate is used for serine and methionine biosynthesis for instance. The sequence is that of C-1-tetrahydrofolate synthase, cytoplasmic (MTHFD1) from Pongo abelii (Sumatran orangutan).